Consider the following 407-residue polypeptide: Serpin-Z2 (407 aa).

The tract at residues 1-28 (MDSKRKNQELSTSETADPSLSKTNKKQK) is disordered. A compositionally biased stretch (polar residues) spans 9–22 (ELSTSETADPSLSK). The segment at 344 to 368 (GTEAAAATTVVVVTGSCLWEPKKKI) is RCL.

The protein belongs to the serpin family.

Its function is as follows. Probable serine protease inhibitor. This is Serpin-Z2 from Arabidopsis thaliana (Mouse-ear cress).